Reading from the N-terminus, the 107-residue chain is Hydrogenase expression/formation protein HoxL (107 aa).

This sequence belongs to the HupF/HypC family.

The chain is Hydrogenase expression/formation protein HoxL (hoxL) from Cupriavidus necator (strain ATCC 17699 / DSM 428 / KCTC 22496 / NCIMB 10442 / H16 / Stanier 337) (Ralstonia eutropha).